A 361-amino-acid chain; its full sequence is Chorismate synthase (361 aa).

Arg48 and Arg54 together coordinate NADP(+). FMN contacts are provided by residues 125–127 (RSS), 238–239 (NA), Gly278, 293–297 (KPTSS), and Arg319.

Belongs to the chorismate synthase family. Homotetramer. The cofactor is FMNH2.

It catalyses the reaction 5-O-(1-carboxyvinyl)-3-phosphoshikimate = chorismate + phosphate. The protein operates within metabolic intermediate biosynthesis; chorismate biosynthesis; chorismate from D-erythrose 4-phosphate and phosphoenolpyruvate: step 7/7. Its function is as follows. Catalyzes the anti-1,4-elimination of the C-3 phosphate and the C-6 proR hydrogen from 5-enolpyruvylshikimate-3-phosphate (EPSP) to yield chorismate, which is the branch point compound that serves as the starting substrate for the three terminal pathways of aromatic amino acid biosynthesis. This reaction introduces a second double bond into the aromatic ring system. This chain is Chorismate synthase, found in Edwardsiella ictaluri (strain 93-146).